We begin with the raw amino-acid sequence, 347 residues long: MSDERVVTPRAGEEDQQIEKSLRPRRLAEFIGQEKVVEQLRIAIAAAKGRGEPLDHTLLYGPPGLGKTSLAGVLANEMEVNIKLTSGPAIERAGDLAALLTNLQKDDILFIDEIHRLNRAIEEVLYPAMEDFALDIMVGKGPGARSLRLKLPRFTVVGATTRLALLTSPLRDRFGSVHRLEFYSVDALYEIVMRSARILGVVCTPEGAREIAARARGTPRIVNRLLRRVRDYAQVIGDGIITLDVARDALAKLEVDHLGLDENDRRLLRAIIDLFGGGPVGLSTLAASLAEEVDAIEDVYEPFLLQLGFLQRTPRGRIATRRAYEHLGVPYVERSVDNGAEQGRLWT.

Positions M1–Y183 are large ATPase domain (RuvB-L). ATP contacts are provided by residues L22, R23, G64, K67, T68, S69, E130–F132, R173, Y183, and R220. T68 is a binding site for Mg(2+). Residues S184–E254 form a small ATPAse domain (RuvB-S) region. Residues H257–T347 form a head domain (RuvB-H) region. Positions 312 and 317 each coordinate DNA.

Belongs to the RuvB family. In terms of assembly, homohexamer. Forms an RuvA(8)-RuvB(12)-Holliday junction (HJ) complex. HJ DNA is sandwiched between 2 RuvA tetramers; dsDNA enters through RuvA and exits via RuvB. An RuvB hexamer assembles on each DNA strand where it exits the tetramer. Each RuvB hexamer is contacted by two RuvA subunits (via domain III) on 2 adjacent RuvB subunits; this complex drives branch migration. In the full resolvosome a probable DNA-RuvA(4)-RuvB(12)-RuvC(2) complex forms which resolves the HJ.

Its subcellular location is the cytoplasm. The catalysed reaction is ATP + H2O = ADP + phosphate + H(+). The RuvA-RuvB-RuvC complex processes Holliday junction (HJ) DNA during genetic recombination and DNA repair, while the RuvA-RuvB complex plays an important role in the rescue of blocked DNA replication forks via replication fork reversal (RFR). RuvA specifically binds to HJ cruciform DNA, conferring on it an open structure. The RuvB hexamer acts as an ATP-dependent pump, pulling dsDNA into and through the RuvAB complex. RuvB forms 2 homohexamers on either side of HJ DNA bound by 1 or 2 RuvA tetramers; 4 subunits per hexamer contact DNA at a time. Coordinated motions by a converter formed by DNA-disengaged RuvB subunits stimulates ATP hydrolysis and nucleotide exchange. Immobilization of the converter enables RuvB to convert the ATP-contained energy into a lever motion, pulling 2 nucleotides of DNA out of the RuvA tetramer per ATP hydrolyzed, thus driving DNA branch migration. The RuvB motors rotate together with the DNA substrate, which together with the progressing nucleotide cycle form the mechanistic basis for DNA recombination by continuous HJ branch migration. Branch migration allows RuvC to scan DNA until it finds its consensus sequence, where it cleaves and resolves cruciform DNA. The sequence is that of Holliday junction branch migration complex subunit RuvB from Roseiflexus castenholzii (strain DSM 13941 / HLO8).